Here is a 409-residue protein sequence, read N- to C-terminus: Elongation factor Tu (409 aa).

Residues 10–214 enclose the tr-type G domain; the sequence is KPHVNIGTIG…EVDAYIPEPE (205 aa). The interval 19–26 is G1; it reads GHVDHGKT. Position 19 to 26 (19 to 26) interacts with GTP; that stretch reads GHVDHGKT. Thr-26 serves as a coordination point for Mg(2+). Residues 60-64 are G2; it reads GITIN. The G3 stretch occupies residues 81–84; sequence DCPG. Residues 81-85 and 136-139 each bind GTP; these read DCPGH and NKQD. The G4 stretch occupies residues 136–139; sequence NKQD. Positions 174-176 are G5; the sequence is SAL.

Belongs to the TRAFAC class translation factor GTPase superfamily. Classic translation factor GTPase family. EF-Tu/EF-1A subfamily. In terms of assembly, monomer.

Its subcellular location is the cytoplasm. It catalyses the reaction GTP + H2O = GDP + phosphate + H(+). Its function is as follows. GTP hydrolase that promotes the GTP-dependent binding of aminoacyl-tRNA to the A-site of ribosomes during protein biosynthesis. This chain is Elongation factor Tu, found in Rippkaea orientalis (strain PCC 8801 / RF-1) (Cyanothece sp. (strain PCC 8801)).